A 393-amino-acid chain; its full sequence is Formate-dependent phosphoribosylglycinamide formyltransferase (393 aa).

N(1)-(5-phospho-beta-D-ribosyl)glycinamide is bound by residues 22–23 and Glu82; that span reads EL. ATP is bound by residues Arg114, Lys155, 160 to 165, 195 to 198, and Glu203; these read SSGKGQ and EGFI. One can recognise an ATP-grasp domain in the interval 119 to 308; the sequence is RLAAEELGLP…EFALHARAIL (190 aa). Mg(2+) is bound by residues Glu267 and Glu279. N(1)-(5-phospho-beta-D-ribosyl)glycinamide-binding positions include Asp286, Lys356, and 363–364; that span reads RR.

Belongs to the PurK/PurT family. As to quaternary structure, homodimer.

The catalysed reaction is N(1)-(5-phospho-beta-D-ribosyl)glycinamide + formate + ATP = N(2)-formyl-N(1)-(5-phospho-beta-D-ribosyl)glycinamide + ADP + phosphate + H(+). It functions in the pathway purine metabolism; IMP biosynthesis via de novo pathway; N(2)-formyl-N(1)-(5-phospho-D-ribosyl)glycinamide from N(1)-(5-phospho-D-ribosyl)glycinamide (formate route): step 1/1. Functionally, involved in the de novo purine biosynthesis. Catalyzes the transfer of formate to 5-phospho-ribosyl-glycinamide (GAR), producing 5-phospho-ribosyl-N-formylglycinamide (FGAR). Formate is provided by PurU via hydrolysis of 10-formyl-tetrahydrofolate. This Stutzerimonas stutzeri (strain A1501) (Pseudomonas stutzeri) protein is Formate-dependent phosphoribosylglycinamide formyltransferase.